The following is a 336-amino-acid chain: Fructose-1,6-bisphosphatase class 1 (336 aa).

E90, D112, L114, and D115 together coordinate Mg(2+). Substrate contacts are provided by residues 115 to 118 (DGSS), N211, and K277. Residue E283 participates in Mg(2+) binding.

This sequence belongs to the FBPase class 1 family. As to quaternary structure, homotetramer. It depends on Mg(2+) as a cofactor.

It is found in the cytoplasm. It catalyses the reaction beta-D-fructose 1,6-bisphosphate + H2O = beta-D-fructose 6-phosphate + phosphate. Its pathway is carbohydrate biosynthesis; gluconeogenesis. The chain is Fructose-1,6-bisphosphatase class 1 from Pseudomonas entomophila (strain L48).